The chain runs to 533 residues: Na(+)/H(+) antiporter NhaB (533 aa).

Helical transmembrane passes span 28–50 (FLII…VLVL), 67–87 (PGGL…SQVL), 96–116 (VLLL…LLLF), 131–165 (VSLM…FYSI), 254–274 (VPVL…GIFG), 316–336 (LIAG…SVII), 364–384 (LAVF…APVI), 396–416 (LVIF…VFVG), 454–474 (ATPN…APLI), and 481–501 (MVWM…MAIQ).

It belongs to the NhaB Na(+)/H(+) (TC 2.A.34) antiporter family.

It is found in the cell inner membrane. The enzyme catalyses 2 Na(+)(in) + 3 H(+)(out) = 2 Na(+)(out) + 3 H(+)(in). Na(+)/H(+) antiporter that extrudes sodium in exchange for external protons. This is Na(+)/H(+) antiporter NhaB from Shewanella baltica (strain OS195).